The chain runs to 282 residues: Heat stress transcription factor A-6a (282 aa).

The DNA-binding element occupies 17 to 111 (PTAFLTKTYN…LLKNIKRRKT (95 aa)). Residues 111 to 177 (TSSQTQTQSL…MMMNFLLKKI (67 aa)) form a hydrophobic repeat HR-A/B region. The Bipartite nuclear localization signal motif lies at 175–190 (KKIKKPSFLQSLRKRN). Positions 261–270 (EGIWKGFVLS) match the AHA motif.

It belongs to the HSF family. Class A subfamily. Homotrimer. In terms of processing, exhibits temperature-dependent phosphorylation.

It is found in the nucleus. Functionally, transcriptional activator that specifically binds DNA sequence 5'-AGAAnnTTCT-3' known as heat shock promoter elements (HSE). The polypeptide is Heat stress transcription factor A-6a (HSFA6A) (Arabidopsis thaliana (Mouse-ear cress)).